Here is a 304-residue protein sequence, read N- to C-terminus: Cytochrome c biogenesis protein CcsA (304 aa).

Transmembrane regions (helical) follow at residues 8–28 (LVTS…PIAF), 37–57 (PGVV…QLVL), 63–83 (GHFP…ACTL), 96–116 (IVAA…SFAL), 141–161 (VIMV…AVLV), 212–232 (TITV…VWAN), 246–263 (TWAL…HTRL), and 275–295 (VAVV…LLGI).

It belongs to the CcmF/CycK/Ccl1/NrfE/CcsA family. May interact with ccs1.

Its subcellular location is the cellular thylakoid membrane. Its function is as follows. Required during biogenesis of c-type cytochromes (cytochrome c6 and cytochrome f) at the step of heme attachment. This is Cytochrome c biogenesis protein CcsA from Synechococcus sp. (strain CC9902).